The chain runs to 364 residues: Fructose-bisphosphate aldolase B (364 aa).

2 residues coordinate substrate: R56 and K147. E188 acts as the Proton acceptor in catalysis. K230 functions as the Schiff-base intermediate with dihydroxyacetone-P in the catalytic mechanism.

The protein belongs to the class I fructose-bisphosphate aldolase family. Homotetramer.

The protein localises to the cytoplasm. The protein resides in the cytoskeleton. Its subcellular location is the microtubule organizing center. It is found in the centrosome. It localises to the centriolar satellite. The catalysed reaction is beta-D-fructose 1,6-bisphosphate = D-glyceraldehyde 3-phosphate + dihydroxyacetone phosphate. Its pathway is carbohydrate degradation; glycolysis; D-glyceraldehyde 3-phosphate and glycerone phosphate from D-glucose: step 4/4. This is Fructose-bisphosphate aldolase B (ALDOB) from Gallus gallus (Chicken).